The following is a 423-amino-acid chain: Putative UPF0496 protein 5 (423 aa).

Positions 1 to 14 (MGNRHGIMRPRRLA) are enriched in basic residues. The disordered stretch occupies residues 1–37 (MGNRHGIMRPRRLASGRSAAEEEEDGEGEPGSYEAAC). A run of 2 helical transmembrane segments spans residues 224-244 (IVFLTSFAALLVCSVVAAAIA) and 247-267 (PVAAALAAAASMPVGSAGKWM).

Belongs to the UPF0496 family.

The protein localises to the membrane. This is Putative UPF0496 protein 5 from Oryza sativa subsp. japonica (Rice).